Here is a 61-residue protein sequence, read N- to C-terminus: Insect toxin BsIT3 (61 aa).

The LCN-type CS-alpha/beta domain maps to 1–61; that stretch reads DGYILNSKGC…RWTSSKNKCN (61 aa). 4 disulfides stabilise this stretch: Cys10/Cys60, Cys14/Cys35, Cys21/Cys42, and Cys25/Cys44.

This sequence belongs to the long (4 C-C) scorpion toxin superfamily. Sodium channel inhibitor family. Beta subfamily. In terms of tissue distribution, expressed by the venom gland.

Its subcellular location is the secreted. Depressant insect beta-toxins cause a transient contraction paralysis followed by a slow flaccid paralysis. They bind voltage-independently at site-4 of sodium channels (Nav) and shift the voltage of activation toward more negative potentials thereby affecting sodium channel activation and promoting spontaneous and repetitive firing. This toxin is active only on insects. The protein is Insect toxin BsIT3 of Hottentotta tamulus sindicus (Scorpion).